A 143-amino-acid chain; its full sequence is Hemoglobin subunit alpha (143 aa).

Ser2 is subject to N-acetylserine. Positions 2–143 constitute a Globin domain; the sequence is SLSDKDKAAV…LALALSEKYR (142 aa). Residue His60 coordinates O2. His89 lines the heme b pocket.

The protein belongs to the globin family. Heterotetramer of two alpha chains and two beta chains. In terms of tissue distribution, red blood cells.

Involved in oxygen transport from gills to the various peripheral tissues. This chain is Hemoglobin subunit alpha (hba), found in Cyprinus carpio (Common carp).